The primary structure comprises 513 residues: 2-isopropylmalate synthase (513 aa).

In terms of domain architecture, Pyruvate carboxyltransferase spans 4-266 (IEFFDTSLRD…KSPLVLAETM (263 aa)). Mn(2+) is bound by residues D13, H201, H203, and N237. Residues 390–513 (ILNNVQIDGH…VEQISAHDGI (124 aa)) form a regulatory domain region.

The protein belongs to the alpha-IPM synthase/homocitrate synthase family. LeuA type 1 subfamily. In terms of assembly, homodimer. Requires Mn(2+) as cofactor.

It localises to the cytoplasm. It carries out the reaction 3-methyl-2-oxobutanoate + acetyl-CoA + H2O = (2S)-2-isopropylmalate + CoA + H(+). Its pathway is amino-acid biosynthesis; L-leucine biosynthesis; L-leucine from 3-methyl-2-oxobutanoate: step 1/4. Functionally, catalyzes the condensation of the acetyl group of acetyl-CoA with 3-methyl-2-oxobutanoate (2-ketoisovalerate) to form 3-carboxy-3-hydroxy-4-methylpentanoate (2-isopropylmalate). In Lactococcus lactis subsp. cremoris (strain SK11), this protein is 2-isopropylmalate synthase.